We begin with the raw amino-acid sequence, 260 residues long: Thiazole synthase (260 aa).

The active-site Schiff-base intermediate with DXP is the K96. Residues G157, 184–185 (AG), and 206–207 (NT) contribute to the 1-deoxy-D-xylulose 5-phosphate site.

It belongs to the ThiG family. As to quaternary structure, homotetramer. Forms heterodimers with either ThiH or ThiS.

The protein localises to the cytoplasm. The catalysed reaction is [ThiS sulfur-carrier protein]-C-terminal-Gly-aminoethanethioate + 2-iminoacetate + 1-deoxy-D-xylulose 5-phosphate = [ThiS sulfur-carrier protein]-C-terminal Gly-Gly + 2-[(2R,5Z)-2-carboxy-4-methylthiazol-5(2H)-ylidene]ethyl phosphate + 2 H2O + H(+). It functions in the pathway cofactor biosynthesis; thiamine diphosphate biosynthesis. Catalyzes the rearrangement of 1-deoxy-D-xylulose 5-phosphate (DXP) to produce the thiazole phosphate moiety of thiamine. Sulfur is provided by the thiocarboxylate moiety of the carrier protein ThiS. In vitro, sulfur can be provided by H(2)S. This chain is Thiazole synthase, found in Rhodopseudomonas palustris (strain BisB5).